The following is a 261-amino-acid chain: Na(+)-translocating NADH-quinone reductase subunit C (261 aa).

Residues 12–32 (LGVVVGLSLVCSIIVSTAAVG) form a helical membrane-spanning segment. At threonine 229 the chain carries FMN phosphoryl threonine.

Composed of six subunits; NqrA, NqrB, NqrC, NqrD, NqrE and NqrF. FMN serves as cofactor.

Its subcellular location is the cell inner membrane. It carries out the reaction a ubiquinone + n Na(+)(in) + NADH + H(+) = a ubiquinol + n Na(+)(out) + NAD(+). In terms of biological role, NQR complex catalyzes the reduction of ubiquinone-1 to ubiquinol by two successive reactions, coupled with the transport of Na(+) ions from the cytoplasm to the periplasm. NqrA to NqrE are probably involved in the second step, the conversion of ubisemiquinone to ubiquinol. The protein is Na(+)-translocating NADH-quinone reductase subunit C of Vibrio campbellii (strain ATCC BAA-1116).